We begin with the raw amino-acid sequence, 200 residues long: Rubrerythrin (200 aa).

One can recognise a Ferritin-like diiron domain in the interval 12 to 155 (SIKGSKTEKH…ALLAHVEDGS (144 aa)). Residues E29, E62, E103, E106, E137, H140, C167, C170, C183, and C186 each coordinate Fe(3+). In terms of domain architecture, Rubredoxin-like spans 162 to 200 (EIAWQCRNCGYVITSKKAPKLCPACAHPQAYFEPMKTNY).

As to quaternary structure, homodimer. Possesses two rubredoxin-like centers and two non-sulfur oxo-bridged di-iron centers per dimer. Fe(3+) is required as a cofactor.

It localises to the cytoplasm. In terms of biological role, may provide oxidative stress protection via catalytic reduction of intracellular hydrogen peroxide. The protein is Rubrerythrin (rbr) of Porphyromonas gingivalis (strain ATCC BAA-308 / W83).